We begin with the raw amino-acid sequence, 1075 residues long: Error-prone DNA polymerase (1075 aa).

Belongs to the DNA polymerase type-C family. DnaE2 subfamily.

It is found in the cytoplasm. It catalyses the reaction DNA(n) + a 2'-deoxyribonucleoside 5'-triphosphate = DNA(n+1) + diphosphate. Functionally, DNA polymerase involved in damage-induced mutagenesis and translesion synthesis (TLS). It is not the major replicative DNA polymerase. The chain is Error-prone DNA polymerase from Ralstonia nicotianae (strain ATCC BAA-1114 / GMI1000) (Ralstonia solanacearum).